A 923-amino-acid polypeptide reads, in one-letter code: Probable ribosylation factor GTPase-activating protein cnt6 (923 aa).

Serine 207 carries the post-translational modification Phosphoserine. Over residues 444 to 455 (TTRRDKGREMHR) the composition is skewed to basic and acidic residues. The segment at 444-476 (TTRRDKGREMHRSQVIQTSGRPKSMAPPSPSPI) is disordered. In terms of domain architecture, PH spans 526-632 (KIFKEGLLLV…WIEAICEAAK (107 aa)). Residues 714-837 (NIFIQMLRKT…AFIDFAGVDA (124 aa)) enclose the Arf-GAP domain. A C4-type zinc finger spans residues 730 to 754 (CADCGSVKDVTWCSINIPVVLCIEC).

The protein localises to the cytoplasm. It is found in the cell tip. GTPase-activating protein for the ADP ribosylation factor family. The protein is Probable ribosylation factor GTPase-activating protein cnt6 (cnt6) of Schizosaccharomyces pombe (strain 972 / ATCC 24843) (Fission yeast).